The following is a 679-amino-acid chain: DNA ligase (679 aa).

Residues 36 to 40, 85 to 86, and Glu-116 contribute to the NAD(+) site; these read DAQYD and SL. The active-site N6-AMP-lysine intermediate is the Lys-118. 4 residues coordinate NAD(+): Arg-139, Glu-174, Lys-300, and Lys-324. The Zn(2+) site is built by Cys-418, Cys-421, Cys-436, and Cys-441. Residues 600–679 enclose the BRCT domain; sequence EGGGPLNGKV…NEFRELTGRK (80 aa).

The protein belongs to the NAD-dependent DNA ligase family. LigA subfamily. Mg(2+) serves as cofactor. Requires Mn(2+) as cofactor.

The enzyme catalyses NAD(+) + (deoxyribonucleotide)n-3'-hydroxyl + 5'-phospho-(deoxyribonucleotide)m = (deoxyribonucleotide)n+m + AMP + beta-nicotinamide D-nucleotide.. Functionally, DNA ligase that catalyzes the formation of phosphodiester linkages between 5'-phosphoryl and 3'-hydroxyl groups in double-stranded DNA using NAD as a coenzyme and as the energy source for the reaction. It is essential for DNA replication and repair of damaged DNA. This is DNA ligase from Pelotomaculum thermopropionicum (strain DSM 13744 / JCM 10971 / SI).